Reading from the N-terminus, the 141-residue chain is MGISVHCDIVSAEQEIFSGLVEMVIAAGSEGDLGITPGHTPLLTALNPGPVRIIKQGGEEEVFFVTGGFLEVQPNMVTILSDSAQRAGDMDEAAALEAKKEAEKALANRGGDFEYSRAASQLAEAAARLRTIQQMRNKLKR.

Belongs to the ATPase epsilon chain family. As to quaternary structure, F-type ATPases have 2 components, CF(1) - the catalytic core - and CF(0) - the membrane proton channel. CF(1) has five subunits: alpha(3), beta(3), gamma(1), delta(1), epsilon(1). CF(0) has three main subunits: a, b and c.

The protein resides in the cell inner membrane. Functionally, produces ATP from ADP in the presence of a proton gradient across the membrane. In Hahella chejuensis (strain KCTC 2396), this protein is ATP synthase epsilon chain.